The chain runs to 223 residues: Ion-translocating oxidoreductase complex subunit E (223 aa).

The next 7 helical transmembrane spans lie at 17–37, 38–58, 68–88, 91–111, 124–144, 156–176, and 181–201; these read SLVQ…TINA, IGLG…ISIL, IPIY…LLHA, FNLY…CIVV, VISF…MFVI, FLFG…FTFI, and TIIL…VIAF.

The protein belongs to the NqrDE/RnfAE family. In terms of assembly, the complex is composed of six subunits: RnfA, RnfB, RnfC, RnfD, RnfE and RnfG.

It localises to the cell inner membrane. In terms of biological role, part of a membrane-bound complex that couples electron transfer with translocation of ions across the membrane. This Buchnera aphidicola subsp. Schizaphis graminum (strain Sg) protein is Ion-translocating oxidoreductase complex subunit E.